We begin with the raw amino-acid sequence, 131 residues long: Peptide methionine sulfoxide reductase MsrB (131 aa).

In terms of domain architecture, MsrB spans 9 to 131 (DEDWKKELTP…NSASLKFQKE (123 aa)). Positions 48, 51, 97, and 100 each coordinate Zn(2+). Cys120 acts as the Nucleophile in catalysis.

Belongs to the MsrB Met sulfoxide reductase family. Zn(2+) is required as a cofactor.

The enzyme catalyses L-methionyl-[protein] + [thioredoxin]-disulfide + H2O = L-methionyl-(R)-S-oxide-[protein] + [thioredoxin]-dithiol. This is Peptide methionine sulfoxide reductase MsrB from Leptospira interrogans serogroup Icterohaemorrhagiae serovar Lai (strain 56601).